We begin with the raw amino-acid sequence, 236 residues long: Small ribosomal subunit protein uS2c (236 aa).

As to quaternary structure, component of the chloroplast small ribosomal subunit (SSU). Mature 70S chloroplast ribosomes of higher plants consist of a small (30S) and a large (50S) subunit. The 30S small subunit contains 1 molecule of ribosomal RNA (16S rRNA) and 24 different proteins. The 50S large subunit contains 3 rRNA molecules (23S, 5S and 4.5S rRNA) and 33 different proteins.

The protein localises to the plastid. It localises to the chloroplast. Component of the chloroplast ribosome (chloro-ribosome), a dedicated translation machinery responsible for the synthesis of chloroplast genome-encoded proteins, including proteins of the transcription and translation machinery and components of the photosynthetic apparatus. This Spinacia oleracea (Spinach) protein is Small ribosomal subunit protein uS2c (rps2).